We begin with the raw amino-acid sequence, 589 residues long: MRSMKAIIEYLLKQALINLQQSGEMPIDLEIEIKVENAKDPAHGDYATNLALVLAKPCRQAPKVLAERLVAVIPVDPSVEKIEIAGAGFINFFMRSTARSLIISEILNKGKEFGRGNLGQSQKVLIEFVSANPTGPLHVGHGRGAAFGATLGNVLKAAGYDVTLEYYVNDAGRQMNILAVSVWLRYLELAGEPIVFPANGYKGQYVYEIAQEIWSEQGNQFVHPWISVVENLPADEPEGGDKETYIDAIIARAQSLLGKDGFANFHQHALKTVLDDIKDDLQAFGVRFDSWFSEQSLFEDGSIEKGIQALKDRGHTYEREGALWFRATDFGDEKDRVLVRANGQTTYFASDVAYHWNKYDRGFDRVIDIFGADHHGYVTRIKTAVKALGHDESALDVILVQFAILYRGGDRVQMSTRSGSFVTLRELREEVGNDAARYFYVARKPEQHMDFDLDLAKSESSDNPVYYIQYAHARICSVLRQLKERGLKWDKDMGLKNLDLLEQQHEATLISLIARYPEVIQSAAASCEPHQLAYYLRELANGLHSYYNAIQLLCEQEQLRCARLCLLESVRQVLNNGLAILGVSAPESM.

Residues 131–141 (ANPTGPLHVGH) carry the 'HIGH' region motif.

Belongs to the class-I aminoacyl-tRNA synthetase family. Monomer.

It is found in the cytoplasm. It carries out the reaction tRNA(Arg) + L-arginine + ATP = L-arginyl-tRNA(Arg) + AMP + diphosphate. The polypeptide is Arginine--tRNA ligase (Legionella pneumophila subsp. pneumophila (strain Philadelphia 1 / ATCC 33152 / DSM 7513)).